The primary structure comprises 203 residues: E3 ubiquitin-protein ligase rnf152-B (203 aa).

The segment at 12–55 (CQICFNYYSPRRRPKLLDCKHTCCSVCLQQMRASQKDLRCPWCR) adopts an RING-type zinc-finger fold. The chain crosses the membrane as a helical span at residues 167-187 (SGVCTVILVACVLVFLLGIVL).

The protein belongs to the RNF152 family.

The protein localises to the lysosome membrane. It catalyses the reaction S-ubiquitinyl-[E2 ubiquitin-conjugating enzyme]-L-cysteine + [acceptor protein]-L-lysine = [E2 ubiquitin-conjugating enzyme]-L-cysteine + N(6)-ubiquitinyl-[acceptor protein]-L-lysine.. Its pathway is protein modification; protein ubiquitination. Its function is as follows. E3 ubiquitin-protein ligase that acts as a negative regulator of mTORC1 signaling by mediating ubiquitination of RagA/RRAGA and RHEB. Catalyzes 'Lys-63'-linked polyubiquitination of RagA/RRAGA in response to amino acid starvation, thereby regulating mTORC1 signaling. Also mediates monoubiquitination of RHEB, promoting its association with the TSC-TBC complex and subsequent inhibition. Also mediates 'Lys-48'-linked polyubiquitination of target proteins and their subsequent targeting to the proteasome for degradation. The polypeptide is E3 ubiquitin-protein ligase rnf152-B (Xenopus laevis (African clawed frog)).